Here is a 1898-residue protein sequence, read N- to C-terminus: Receptor-type tyrosine-protein phosphatase F (1898 aa).

Positions 1-29 (MTPEPAPGRTMVPLVPALVMLGLVAGAHG) are cleaved as a signal peptide. Over 30 to 1254 (DSKPVFVKVP…QQQEEPELLW (1225 aa)) the chain is Extracellular. Ig-like C2-type domains are found at residues 33-123 (PVFV…AKLS), 135-224 (PSID…ANLY), and 232-314 (PRFS…AQVT). C54 and C107 are oxidised to a cystine. 68 to 77 (KKGKKVSSQR) provides a ligand contact to heparin. N117 carries an N-linked (GlcNAc...) asparagine glycan. C156 and C207 are disulfide-bonded. N250 and N295 each carry an N-linked (GlcNAc...) asparagine glycan. C253 and C298 are joined by a disulfide. 8 Fibronectin type-III domains span residues 321–411 (PPID…TGEQ), 416–510 (PPRR…TQQG), 514–604 (QPAD…TAQS), 609–706 (PPQK…TDED), 711–810 (PPRK…TTGA), 811–905 (VPGR…PEDV), 909–1001 (FPQN…TMPV), and 1005–1089 (FAKN…TAPD). The segment at 399–418 (PPSEAVRARTGEQAPSSPPR) is disordered. The tract at residues 693–713 (GPESSPVLVRTDEDVPSGPPR) is disordered. The N-linked (GlcNAc...) asparagine glycan is linked to N721. N-linked (GlcNAc...) asparagine glycosylation is found at N941 and N957. Residues 1255–1275 (VTGPVLAVILIVLIVIAILLF) traverse the membrane as a helical segment. Residues 1276–1898 (KRKRTHSPSS…YLGSFDHYAT (623 aa)) lie on the Cytoplasmic side of the membrane. S1296 carries the phosphoserine modification. 2 consecutive Tyrosine-protein phosphatase domains span residues 1343 to 1598 (FSQE…LLEA) and 1630 to 1889 (MELE…ALEY). Substrate contacts are provided by residues D1507, 1539–1545 (CSAGVGR), and Q1583. C1539 acts as the Phosphocysteine intermediate in catalysis. The Phosphocysteine intermediate role is filled by C1830.

The protein belongs to the protein-tyrosine phosphatase family. Receptor class 2A subfamily. Interacts with GRIP1. Interacts with PPFIA1, PPFIA2 and PPFIA3. Interacts with INSR.

The protein localises to the membrane. The enzyme catalyses O-phospho-L-tyrosyl-[protein] + H2O = L-tyrosyl-[protein] + phosphate. Its function is as follows. Possible cell adhesion receptor. It possesses an intrinsic protein tyrosine phosphatase activity (PTPase) and dephosphorylates EPHA2 regulating its activity. Functionally, the first PTPase domain has enzymatic activity, while the second one seems to affect the substrate specificity of the first one. This is Receptor-type tyrosine-protein phosphatase F (PTPRF) from Bos taurus (Bovine).